The chain runs to 403 residues: S-adenosylmethionine synthase (403 aa).

Histidine 17 contacts ATP. Residue aspartate 19 participates in Mg(2+) binding. Position 45 (glutamate 45) interacts with K(+). L-methionine contacts are provided by glutamate 58 and glutamine 101. The interval 101–111 is flexible loop; the sequence is QSPDIAMGVDR. ATP contacts are provided by residues 177–179, 244–245, aspartate 253, 259–260, alanine 276, and lysine 280; these read DGK, RF, and RK. Residue aspartate 253 participates in L-methionine binding. Residue lysine 284 coordinates L-methionine.

This sequence belongs to the AdoMet synthase family. In terms of assembly, homotetramer; dimer of dimers. The cofactor is Mg(2+). K(+) is required as a cofactor.

The protein localises to the cytoplasm. The catalysed reaction is L-methionine + ATP + H2O = S-adenosyl-L-methionine + phosphate + diphosphate. Its pathway is amino-acid biosynthesis; S-adenosyl-L-methionine biosynthesis; S-adenosyl-L-methionine from L-methionine: step 1/1. In terms of biological role, catalyzes the formation of S-adenosylmethionine (AdoMet) from methionine and ATP. The overall synthetic reaction is composed of two sequential steps, AdoMet formation and the subsequent tripolyphosphate hydrolysis which occurs prior to release of AdoMet from the enzyme. This is S-adenosylmethionine synthase from Geobacillus kaustophilus (strain HTA426).